We begin with the raw amino-acid sequence, 915 residues long: Probable inorganic carbon transporter subunit DabA (915 aa).

Zn(2+) contacts are provided by C392, D394, H566, and C581.

Belongs to the inorganic carbon transporter (TC 9.A.2) DabA family. In terms of assembly, forms a complex with DabB. It depends on Zn(2+) as a cofactor.

Its subcellular location is the cell inner membrane. In terms of biological role, part of an energy-coupled inorganic carbon pump. In Nitrosospira multiformis (strain ATCC 25196 / NCIMB 11849 / C 71), this protein is Probable inorganic carbon transporter subunit DabA.